We begin with the raw amino-acid sequence, 273 residues long: 4-hydroxy-tetrahydrodipicolinate reductase (273 aa).

NAD(+) is bound by residues 12–17 (GAGGRM) and Glu38. Arg39 is a binding site for NADP(+). Residues 102-104 (GTT) and 126-129 (AANF) contribute to the NAD(+) site. The Proton donor/acceptor role is filled by His159. His160 is a (S)-2,3,4,5-tetrahydrodipicolinate binding site. Lys163 serves as the catalytic Proton donor. 169–170 (GT) provides a ligand contact to (S)-2,3,4,5-tetrahydrodipicolinate.

The protein belongs to the DapB family. In terms of assembly, homotetramer.

Its subcellular location is the cytoplasm. The catalysed reaction is (S)-2,3,4,5-tetrahydrodipicolinate + NAD(+) + H2O = (2S,4S)-4-hydroxy-2,3,4,5-tetrahydrodipicolinate + NADH + H(+). The enzyme catalyses (S)-2,3,4,5-tetrahydrodipicolinate + NADP(+) + H2O = (2S,4S)-4-hydroxy-2,3,4,5-tetrahydrodipicolinate + NADPH + H(+). It functions in the pathway amino-acid biosynthesis; L-lysine biosynthesis via DAP pathway; (S)-tetrahydrodipicolinate from L-aspartate: step 4/4. Functionally, catalyzes the conversion of 4-hydroxy-tetrahydrodipicolinate (HTPA) to tetrahydrodipicolinate. In Yersinia enterocolitica serotype O:8 / biotype 1B (strain NCTC 13174 / 8081), this protein is 4-hydroxy-tetrahydrodipicolinate reductase.